Reading from the N-terminus, the 223-residue chain is DNA replication complex GINS protein SLD5 (223 aa).

At methionine 1 the chain carries N-acetylmethionine. 2 positions are modified to phosphoserine: serine 12 and serine 16. Positions 166 to 223 (DLDAYVFLRVKERQENILVEPENDEQRDYVIDLEEGSQHLMRYRTVAPLVASGAIQLI) are important for GINS complex assembly.

It belongs to the GINS4/SLD5 family. As to quaternary structure, component of the CMG helicase complex, a hexameric ring of related MCM2-7 subunits stabilized by CDC45 and the tetrameric GINS complex. Associated with ORC2. Interacts with HELB.

It localises to the nucleus. The protein resides in the chromosome. In terms of biological role, required for initiation of chromosomal DNA replication. Core component of CDC45-MCM-GINS (CMG) helicase, the molecular machine that unwinds template DNA during replication, and around which the replisome is built. In Bos taurus (Bovine), this protein is DNA replication complex GINS protein SLD5 (GINS4).